We begin with the raw amino-acid sequence, 170 residues long: Photosystem I assembly protein Ycf3 (170 aa).

TPR repeat units follow at residues A35–P68, S72–L105, and G120–N153.

It belongs to the Ycf3 family.

Its subcellular location is the plastid. The protein localises to the chloroplast thylakoid membrane. Essential for the assembly of the photosystem I (PSI) complex. May act as a chaperone-like factor to guide the assembly of the PSI subunits. In Oryza sativa (Rice), this protein is Photosystem I assembly protein Ycf3.